Here is a 515-residue protein sequence, read N- to C-terminus: Pescadillo homolog (515 aa).

Positions 270–327 (EVLAALNHTLKIIQTQEEDLEVDEFPIDPNSEDAEAIQAQKEEETKLERLKNLFSECK) form a coiled coil. Residues 318–411 (RLKNLFSECK…KLLPVEEYFP (94 aa)) enclose the BRCT domain. Residues 477 to 515 (RLYEKIMHSKKKKRSEVRKLESKRKVHDEEKAKKKLKSS) form a disordered region. Positions 484 to 501 (HSKKKKRSEVRKLESKRK) are enriched in basic residues.

Belongs to the pescadillo family.

The protein localises to the nucleus. It localises to the nucleolus. It is found in the nucleoplasm. Required for maturation of ribosomal RNAs and formation of the large ribosomal subunit. This chain is Pescadillo homolog, found in Nematostella vectensis (Starlet sea anemone).